A 152-amino-acid chain; its full sequence is Erythema protein SVEP (152 aa).

A signal peptide spans 1–18 (MSITQSFFVLTLAIFGAA).

As to expression, salivary gland (at protein level).

Its subcellular location is the secreted. In terms of biological role, salivary vasoactive peptide; induces vasodilatation in bioassay with rabbit aortic rings. This is Erythema protein SVEP from Simulium vittatum (Striped black fly).